The following is a 97-amino-acid chain: uncharacterized protein (97 aa).

Residues 72–97 are disordered; that stretch reads TVERKRSEHTNSRKKDPSAYTWSDVK. A compositionally biased stretch (basic and acidic residues) spans 73 to 88; it reads VERKRSEHTNSRKKDP.

This sequence belongs to the chlamydial CPn_0121/CT_031/TC_0300 family.

This is an uncharacterized protein from Chlamydia pneumoniae (Chlamydophila pneumoniae).